The sequence spans 275 residues: Rhamnulose-1-phosphate aldolase (275 aa).

The active site involves E117. Zn(2+) contacts are provided by H141, H143, and H212.

Belongs to the aldolase class II family. RhaD subfamily. Homotetramer. Zn(2+) is required as a cofactor.

Its subcellular location is the cytoplasm. The enzyme catalyses L-rhamnulose 1-phosphate = (S)-lactaldehyde + dihydroxyacetone phosphate. The protein operates within carbohydrate degradation; L-rhamnose degradation; glycerone phosphate from L-rhamnose: step 3/3. In terms of biological role, catalyzes the reversible cleavage of L-rhamnulose-1-phosphate to dihydroxyacetone phosphate (DHAP) and L-lactaldehyde. This Salmonella heidelberg (strain SL476) protein is Rhamnulose-1-phosphate aldolase.